The sequence spans 209 residues: Small ribosomal subunit protein uS4 (209 aa).

The span at 1–13 (MSTKSRTRSKTRL) shows a compositional bias: basic residues. 2 disordered regions span residues 1–20 (MSTK…LGIP) and 28–49 (YLEK…QDSD). The S4 RNA-binding domain occupies 95 to 176 (QRLDALVVRS…PKLPSYLEVE (82 aa)).

The protein belongs to the universal ribosomal protein uS4 family. In terms of assembly, part of the 30S ribosomal subunit. Contacts protein S5. The interaction surface between S4 and S5 is involved in control of translational fidelity.

In terms of biological role, one of the primary rRNA binding proteins, it binds directly to 16S rRNA where it nucleates assembly of the body of the 30S subunit. Functionally, with S5 and S12 plays an important role in translational accuracy. The protein is Small ribosomal subunit protein uS4 of Clavibacter michiganensis subsp. michiganensis (strain NCPPB 382).